The chain runs to 140 residues: ATP synthase epsilon chain (140 aa).

This sequence belongs to the ATPase epsilon chain family. As to quaternary structure, F-type ATPases have 2 components, CF(1) - the catalytic core - and CF(0) - the membrane proton channel. CF(1) has five subunits: alpha(3), beta(3), gamma(1), delta(1), epsilon(1). CF(0) has three main subunits: a, b and c.

It is found in the cell inner membrane. In terms of biological role, produces ATP from ADP in the presence of a proton gradient across the membrane. The protein is ATP synthase epsilon chain of Janthinobacterium sp. (strain Marseille) (Minibacterium massiliensis).